The sequence spans 430 residues: Potassium channel subfamily K member 12 (430 aa).

Residues 1–38 are Cytoplasmic-facing; it reads MSSRSPRPPPRRSRRRLPRPSCCCCCCRRSHLNEDTGR. The interval 11–16 is ER retention/retrieval signal; that stretch reads RRSRRR. A helical membrane pass occupies residues 39–59; it reads FVLLAALIGLYLVAGATVFSA. The N-linked (GlcNAc...) asparagine glycan is linked to N78. Residues 114–134 constitute an intramembrane region (pore-forming); it reads WDFPGAFYFVGTVVSTIGFGM. Residues T129, I130, and G131 each contribute to the K(+) site. A selectivity filter 1 region spans residues 129-134; the sequence is TIGFGM. Residues 145–165 form a helical membrane-spanning segment; sequence FLIAYGLFGCAGTILFFNLFL. The Cytoplasmic segment spans residues 166–212; that stretch reads ERIISLLAFIMRACRERQLRRSGLLPATFRRGSALSEADSLAGWKPS. A helical transmembrane segment spans residues 213 to 233; it reads VYHVLLILGLFAVLLSCCASA. The segment at residues 243 to 263 is an intramembrane region (pore-forming); it reads YVDSLYFCFVTFSTIGFGDLV. The K(+) site is built by T256, I257, G258, and F259. Residues 256-261 form a selectivity filter 2 region; that stretch reads TIGFGD. Residues 282-302 traverse the membrane as a helical segment; that stretch reads LFILLGVCCIYSLFNVISILI. Residues 303–430 lie on the Cytoplasmic side of the membrane; the sequence is KQVLNWMLRK…NRLAETSASR (128 aa).

It belongs to the two pore domain potassium channel (TC 1.A.1.8) family. As to quaternary structure, homodimer. Heterodimer with KCNK13.

The protein localises to the cell membrane. The protein resides in the endoplasmic reticulum membrane. The catalysed reaction is K(+)(in) = K(+)(out). Functionally, k(+) channel subunit that may homo- and heterodimerize to form functional channels with distinct regulatory and gating properties. Can heterodimerize with KCNK13 subunit to conduct K(+) outward rectifying currents at the plasma membrane. The homodimers are mainly retained in the endoplasmic reticulum compartment and may be targeted to the cell surface upon phosphorylation or other activation signals yet to be elucidated. The sequence is that of Potassium channel subfamily K member 12 from Homo sapiens (Human).